The chain runs to 413 residues: Alpha-1-antitrypsin 1-2 (413 aa).

The N-terminal stretch at 1–24 (MTPSISWGLLLLAGLCCMVPSFLA) is a signal peptide. 3 N-linked (GlcNAc...) asparagine glycosylation sites follow: N64, N101, and N265. The segment at 368–387 (AATVFEAVPMSMPPILRFDH) is RCL.

It belongs to the serpin family.

The protein localises to the secreted. Inhibitor of serine proteases. Its primary target is elastase, but it also has a moderate affinity for plasmin and thrombin. This is Alpha-1-antitrypsin 1-2 (Serpina1b) from Mus musculus (Mouse).